Here is a 114-residue protein sequence, read N- to C-terminus: Progonadoliberin-2 (114 aa).

Positions 1-25 are cleaved as a signal peptide; that stretch reads MASSMLGFLLLLLLLMAAHPGPSEA. A disordered region spans residues 22-80; it reads PSEAQHWSHGWYPGGKRASNSPQDPQSALRPPAPSAAQTAHSFRSAALASPEDSVPWEG. Glycine 35 is modified (glycine amide).

It belongs to the GnRH family. In terms of tissue distribution, midbrain.

It is found in the secreted. Its function is as follows. Stimulates the secretion of gonadotropins; it stimulates the secretion of both luteinizing and follicle-stimulating hormones. This chain is Progonadoliberin-2 (GNRH2), found in Tupaia belangeri (Common tree shrew).